Reading from the N-terminus, the 152-residue chain is UPF0225 protein YchJ (152 aa).

It belongs to the UPF0225 family.

This Escherichia coli O127:H6 (strain E2348/69 / EPEC) protein is UPF0225 protein YchJ.